The sequence spans 90 residues: DNA-binding protein HU-alpha (90 aa).

Belongs to the bacterial histone-like protein family. Heterodimer of an alpha and a beta chain.

Histone-like DNA-binding protein which is capable of wrapping DNA to stabilize it, and thus to prevent its denaturation under extreme environmental conditions. In Vibrio cholerae serotype O1 (strain ATCC 39315 / El Tor Inaba N16961), this protein is DNA-binding protein HU-alpha (hupA).